The following is a 294-amino-acid chain: Phosphate import ATP-binding protein PstB (294 aa).

A compositionally biased stretch (polar residues) spans 1–18 (MSETMTNQNVVNEEQPFN). The disordered stretch occupies residues 1–24 (MSETMTNQNVVNEEQPFNESKHRS). The region spanning 48 to 289 (LEVNKLKLFY…PSCKQTEDYI (242 aa)) is the ABC transporter domain. Position 80–87 (80–87 (GPSGCGKS)) interacts with ATP.

The protein belongs to the ABC transporter superfamily. Phosphate importer (TC 3.A.1.7) family. In terms of assembly, the complex is composed of two ATP-binding proteins (PstB), two transmembrane proteins (PstC and PstA) and a solute-binding protein (PstS).

The protein localises to the cell inner membrane. It catalyses the reaction phosphate(out) + ATP + H2O = ADP + 2 phosphate(in) + H(+). Functionally, part of the ABC transporter complex PstSACB involved in phosphate import. Responsible for energy coupling to the transport system. This Hahella chejuensis (strain KCTC 2396) protein is Phosphate import ATP-binding protein PstB.